Consider the following 116-residue polypeptide: Prefoldin subunit beta (116 aa).

Belongs to the prefoldin subunit beta family. In terms of assembly, heterohexamer of two alpha and four beta subunits.

The protein localises to the cytoplasm. Molecular chaperone capable of stabilizing a range of proteins. Seems to fulfill an ATP-independent, HSP70-like function in archaeal de novo protein folding. This Archaeoglobus fulgidus (strain ATCC 49558 / DSM 4304 / JCM 9628 / NBRC 100126 / VC-16) protein is Prefoldin subunit beta (pfdB).